The sequence spans 74 residues: MAHPSQLGLQDAASPVMEELLHFHDHALMIVFLISTLVLYIIVAMVSTKLTDKYTIDSQEIEIVWTVLPAVILI.

The Mitochondrial intermembrane portion of the chain corresponds to 1-14; it reads MAHPSQLGLQDAAS. A helical transmembrane segment spans residues 15–45; the sequence is PVMEELLHFHDHALMIVFLISTLVLYIIVAM. Residues 46-74 lie on the Mitochondrial matrix side of the membrane; sequence VSTKLTDKYTIDSQEIEIVWTVLPAVILI.

It belongs to the cytochrome c oxidase subunit 2 family. In terms of assembly, component of the cytochrome c oxidase (complex IV, CIV), a multisubunit enzyme composed of 14 subunits. The complex is composed of a catalytic core of 3 subunits MT-CO1, MT-CO2 and MT-CO3, encoded in the mitochondrial DNA, and 11 supernumerary subunits COX4I, COX5A, COX5B, COX6A, COX6B, COX6C, COX7A, COX7B, COX7C, COX8 and NDUFA4, which are encoded in the nuclear genome. The complex exists as a monomer or a dimer and forms supercomplexes (SCs) in the inner mitochondrial membrane with NADH-ubiquinone oxidoreductase (complex I, CI) and ubiquinol-cytochrome c oxidoreductase (cytochrome b-c1 complex, complex III, CIII), resulting in different assemblies (supercomplex SCI(1)III(2)IV(1) and megacomplex MCI(2)III(2)IV(2)). Found in a complex with TMEM177, COA6, COX18, COX20, SCO1 and SCO2. Interacts with TMEM177 in a COX20-dependent manner. Interacts with COX20. Interacts with COX16. The cofactor is Cu cation.

It localises to the mitochondrion inner membrane. It catalyses the reaction 4 Fe(II)-[cytochrome c] + O2 + 8 H(+)(in) = 4 Fe(III)-[cytochrome c] + 2 H2O + 4 H(+)(out). Component of the cytochrome c oxidase, the last enzyme in the mitochondrial electron transport chain which drives oxidative phosphorylation. The respiratory chain contains 3 multisubunit complexes succinate dehydrogenase (complex II, CII), ubiquinol-cytochrome c oxidoreductase (cytochrome b-c1 complex, complex III, CIII) and cytochrome c oxidase (complex IV, CIV), that cooperate to transfer electrons derived from NADH and succinate to molecular oxygen, creating an electrochemical gradient over the inner membrane that drives transmembrane transport and the ATP synthase. Cytochrome c oxidase is the component of the respiratory chain that catalyzes the reduction of oxygen to water. Electrons originating from reduced cytochrome c in the intermembrane space (IMS) are transferred via the dinuclear copper A center (CU(A)) of subunit 2 and heme A of subunit 1 to the active site in subunit 1, a binuclear center (BNC) formed by heme A3 and copper B (CU(B)). The BNC reduces molecular oxygen to 2 water molecules using 4 electrons from cytochrome c in the IMS and 4 protons from the mitochondrial matrix. This chain is Cytochrome c oxidase subunit 2 (mt-co2), found in Megalops atlanticus (Tarpon).